The sequence spans 201 residues: MCAARLSAAAQSTVYAFSARPLTGGEPVSLGSLRGKVLLIENVASLUGTTIRDYTEMNDLQKRLGPRGLVVLGFPCNQFGHQENGKNEEILNSLKYVRPGGGFEPNFTLFEKCEVNGEKAHPLFTFLRNALPTPSDDPTALMTDPKYIIWSPVCRNDIAWNFEKFLVGPDGVPVRRYSRRFRTIDIEPDIETLLSQQSGNS.

A phosphoserine mark is found at serine 7 and serine 32. Selenocysteine 47 is a catalytic residue. Selenocysteine 47 is a non-standard amino acid (selenocysteine). 3 positions are modified to N6-acetyllysine; alternate: lysine 62, lysine 86, and lysine 112. An N6-succinyllysine; alternate mark is found at lysine 62, lysine 86, and lysine 112. Position 119 is an N6-acetyllysine (lysine 119). Lysine 146 carries the N6-acetyllysine; alternate modification. An N6-succinyllysine; alternate modification is found at lysine 146. Phosphoserine is present on serine 195.

The protein belongs to the glutathione peroxidase family. In terms of assembly, homotetramer. Interacts with MIEN1. In terms of processing, during periods of oxidative stress, Sec-47 may react with a superoxide radical, irreversibly lose hydroselenide and be converted to dehydroalanine. As to expression, expressed in liver, kidney, lung, brain and heart.

It is found in the cytoplasm. It localises to the mitochondrion. It catalyses the reaction 2 glutathione + H2O2 = glutathione disulfide + 2 H2O. The enzyme catalyses a hydroperoxy polyunsaturated fatty acid + 2 glutathione = a hydroxy polyunsaturated fatty acid + glutathione disulfide + H2O. It carries out the reaction tert-butyl hydroperoxide + 2 glutathione = tert-butanol + glutathione disulfide + H2O. The catalysed reaction is cumene hydroperoxide + 2 glutathione = 2-phenylpropan-2-ol + glutathione disulfide + H2O. It catalyses the reaction (13S)-hydroperoxy-(9Z,11E)-octadecadienoate + 2 glutathione = (13S)-hydroxy-(9Z,11E)-octadecadienoate + glutathione disulfide + H2O. The enzyme catalyses (9S)-hydroperoxy-(10E,12Z)-octadecadienoate + 2 glutathione = (9S)-hydroxy-(10E,12Z)-octadecadienoate + glutathione disulfide + H2O. It carries out the reaction (5S)-hydroperoxy-(6E,8Z,11Z,14Z)-eicosatetraenoate + 2 glutathione = (5S)-hydroxy-(6E,8Z,11Z,14Z)-eicosatetraenoate + glutathione disulfide + H2O. The catalysed reaction is (12S)-hydroperoxy-(5Z,8Z,10E,14Z)-eicosatetraenoate + 2 glutathione = (12S)-hydroxy-(5Z,8Z,10E,14Z)-eicosatetraenoate + glutathione disulfide + H2O. It catalyses the reaction (12R)-hydroperoxy-(5Z,8Z,10E,14Z)-eicosatetraenoate + 2 glutathione = (12R)-hydroxy-(5Z,8Z,10E,14Z)-eicosatetraenoate + glutathione disulfide + H2O. The enzyme catalyses (15S)-hydroperoxy-(5Z,8Z,11Z,13E)-eicosatetraenoate + 2 glutathione = (15S)-hydroxy-(5Z,8Z,11Z,13E)-eicosatetraenoate + glutathione disulfide + H2O. It carries out the reaction (5S)-hydroperoxy-(6E,8Z,11Z,14Z,17Z)-eicosapentaenoate + 2 glutathione = (5S)-hydroxy-(6E,8Z,11Z,14Z,17Z)-eicosapentaenoate + glutathione disulfide + H2O. The catalysed reaction is (12S)-hydroperoxy-(5Z,8Z,10E,14Z,17Z)-eicosapentaenoate + 2 glutathione = (12S)-hydroxy-(5Z,8Z,10E,14Z,17Z)-eicosapentaenoate + glutathione disulfide + H2O. It catalyses the reaction (15S)-hydroperoxy-(5Z,8Z,11Z,13E,17Z)-eicosapentaenoate + 2 glutathione = (15S)-hydroxy-(5Z,8Z,11Z,13E,17Z)-eicosapentaenoate + glutathione disulfide + H2O. The enzyme catalyses (15S)-hydroperoxy-(11Z,13E)-eicosadienoate + 2 glutathione = (15S)-hydroxy-(11Z,13E)-eicosadienoate + glutathione disulfide + H2O. It carries out the reaction (17S)-hydroperoxy-(4Z,7Z,10Z,13Z,15E,19Z)-docosahexaenoate + 2 glutathione = (17S)-hydroxy-(4Z,7Z,10Z,13Z,15E,19Z)-docosahexaenoate + glutathione disulfide + H2O. In terms of biological role, catalyzes the reduction of hydroperoxides in a glutathione-dependent manner thus regulating cellular redox homeostasis. Can reduce small soluble hydroperoxides such as H2O2, cumene hydroperoxide and tert-butyl hydroperoxide, as well as several fatty acid-derived hydroperoxides. In platelets catalyzes the reduction of 12-hydroperoxyeicosatetraenoic acid, the primary product of the arachidonate 12-lipoxygenase pathway. The chain is Glutathione peroxidase 1 from Mus musculus (Mouse).